The primary structure comprises 84 residues: U-actitoxin-Avd8e (84 aa).

An N-terminal signal peptide occupies residues 1–22 (MASARTLVLLLIGAVLMCQVSA). The propeptide occupies 23 to 41 (DSELLNEILAAHMEEDMPE). The 41-residue stretch at 44–84 (CIDRYRSNICGSVIRPLDCTRRKSRMGRFARTNCKKLCGFC) folds into the ShKT domain. 3 disulfide bridges follow: Cys-44-Cys-84, Cys-53-Cys-77, and Cys-62-Cys-81.

The protein belongs to the sea anemone 8 toxin family.

The protein resides in the secreted. The protein localises to the nematocyst. The sequence is that of U-actitoxin-Avd8e from Anemonia viridis (Snakelocks anemone).